Reading from the N-terminus, the 331-residue chain is Major ferric iron-binding protein (331 aa).

Positions 1 to 22 (MKTSIRYALLAAALTAATPALA) are cleaved as a signal peptide. Residues His31, Glu79, Tyr217, and Tyr218 each coordinate Fe cation.

Belongs to the bacterial solute-binding protein 1 family.

Its subcellular location is the periplasm. Functionally, this protein may be a central component in the iron-acquisition system. The sequence is that of Major ferric iron-binding protein (fbpA) from Neisseria meningitidis serogroup B (strain ATCC BAA-335 / MC58).